The sequence spans 400 residues: Elongation factor Tu (400 aa).

Positions 10-210 (KPHCNVGTIG…VDTYIPIPPR (201 aa)) constitute a tr-type G domain. The G1 stretch occupies residues 19-26 (GHVDHGKT). Position 19-26 (19-26 (GHVDHGKT)) interacts with GTP. Position 26 (Thr26) interacts with Mg(2+). Residues 60–64 (GLTIA) form a G2 region. The segment at 81–84 (DCPG) is G3. GTP-binding positions include 81–85 (DCPGH) and 136–139 (NKCD). The interval 136 to 139 (NKCD) is G4. The tract at residues 174–176 (SAI) is G5.

This sequence belongs to the TRAFAC class translation factor GTPase superfamily. Classic translation factor GTPase family. EF-Tu/EF-1A subfamily. As to quaternary structure, monomer.

Its subcellular location is the cytoplasm. It catalyses the reaction GTP + H2O = GDP + phosphate + H(+). Its function is as follows. GTP hydrolase that promotes the GTP-dependent binding of aminoacyl-tRNA to the A-site of ribosomes during protein biosynthesis. The polypeptide is Elongation factor Tu (Dehalococcoides mccartyi (strain CBDB1)).